Consider the following 315-residue polypeptide: Protein OPG185 (315 aa).

The first 16 residues, 1-16 (MTRLPILLLLISLVYA), serve as a signal peptide directing secretion. Positions 17 to 121 (TPFPQTSKKI…NDTDKVDYEE (105 aa)) constitute an Ig-like V-type domain. Over 17 to 279 (TPFPQTSKKI…SNYKTKDFVE (263 aa)) the chain is Virion surface. Cysteine 34 and cysteine 103 are disulfide-bonded. N-linked (GlcNAc...) asparagine; by host glycans are attached at residues asparagine 37, asparagine 69, asparagine 112, and asparagine 161. Residues 191–202 (SINTVSASSGES) show a composition bias toward polar residues. A disordered region spans residues 191 to 213 (SINTVSASSGESTTDETPEPITD). Asparagine 254 carries an N-linked (GlcNAc...) asparagine; by host glycan. Residues 280–303 (IFGITALIILSAVAIFCITYYIYN) traverse the membrane as a helical segment. Topologically, residues 304–315 (KRSRKYKTENKV) are intravirion.

Belongs to the orthopoxvirus OPG185 family. In terms of assembly, heterodimerizes with OPG040. The heterodimer OPG185-OPG040 interacts with components of the entry fusion complex OPG143 and OPG094. Heterodimer with C3/VPC protein; disulfide-linked. Glycosylated; contains phosphate and sulfate-substituted glycans. O-glycosylation is required for hemagglutination and hemadsorption activities of infected cell membranes.

The protein resides in the virion membrane. It localises to the host membrane. Prevents cell to cell fusion by interacting with and directing the viral OPG040 protein on the host plasma membrane. The OPG185-OPG040 complex associates with components of the entry fusion complex (EFC) presumably to avoid superinfection and syncytium formation. Via its interaction with C3/VCP protein, protects the infected cell and probably also the extracellular enveloped virus from complement attack. The polypeptide is Protein OPG185 (OPG185) (Homo sapiens (Human)).